Consider the following 1823-residue polypeptide: MSLPLLECKYVTEEFVREGKNGNYGTKLPSSVPMLRFLYELSWILVRGELPIQSCKAVLEGVEFLDKPSREELASCFADVVTQIAQDLTMSGDQRSRLIKLAKWLVESQTVPQRLFQERCEEEFLWEADMVKIKAQDLKGKEVRLNTRLLYQQTKFNLLREESEGYAKLATLLCRGSASSSHNASAATMGIIKSLIGHFDLDPNRVFDIVLDCFELEQDYDTFLNLIPIFPKSHASQILGFKFQYYQRLEVNSPVPVGLYKLTALLVKEEFINLESIYAHLLPKDEEVFEDYNVSSAKRFEEANKIGKINLAATGKDLMEDEKQGDVTVDLFAALDMESEAVTERLPELENNQTLGLLNGFLSVDDWYHANILFERLAPLNPVAHDQICSGLFRLIEKSITHSYRIARQTRFQSSSSASTVKLTPTANTTANRTYLDLPKEVFQMLVTVGPYLYRNTQLLQKICRVLRAYYLSALDLVRDGSNQEGSAYEVSRGHLKEVRLRVEEALGTCLLPSLQLVPANPAVGHEIWEVMSLLPYEARYRLYGEWEKDDEQNPLLLAARQVAKLDTRRILKRLAKENLKQLGRMVAKLAHANPMTVLRTIVNQIEAYRDMIAPVVDAFKYLTQLEYDILEYVVIERLAQSGRDKLKDDGINLSDWLQSLASFWGHLCKKYPSMELRGLFQYLVNQLKRGQGIELVLLQELVQQMANVQYTENLTEDQLDAMAGSETLRYHATSFGMMRNNKALIKSSNRLRDSLLPNDEPKLAIPLLLLIAQHRSLVVVNADAPYIKMVTEQFDRCHGILLQYVDFLSSAVSPTTAYARLVPSLDELVHTYHLEAEVAFLVFRPVMRLFKCRRNGDVSWPLDSGESMDADSEISESESSMILDVGTSEKAVTWSDVLDTVRTMLPSKAWNSLSPDLYATFWGLTLYDLHVPRNRYESEISKQHTALKTLEEVADNSSSAITKRKKEKERIQESLDRLTGELKKHEEHVASVRRRLSREKDTWLSSCPDTLKINMEFLQRCIFPRCTFSMADSVYCAMFVNMLHSLGTPFFNTVNHIDVLICKTLQPMICCCTEYEVGRLGRFLFETLKIAYHWKSKESVYEHECGNMPGFAVYYRYPNSQRVTFGQFVKVHWKWSGRITRLLIQCLESNEYMEIRNALIMLTKISGVFPVTRKTGINLEKRATKIKNDEREDLKVLATGVGAALSARKPHWVTDEEFSMGFLELKAPPVHTPKHASSQNGLLVGVSQGEPTGERATVNQQPESGGLGKDQMLKTKPLDGRTESIPSKSDQGHLKSKGGNPLDSQPSISKKSMEQKETDETPRISDENPVKPASKYSEAELKASSKRGASVNKSAKQDFGKDDGKSGKAIGRTSTADKDLNYLESRQSGLTKALSSTAANGSIATGSSKVKDDGAEALDAQKQSSRTVHSPRHEIVTSVRSSDRLQKRANAVEDSERISKRRKGDAEHKEHDSEPRSSDRDRSVEARLDLNKTVTDDQSTHRDQDRSKDKGYERQDRDHRERVDRSDKPRGDDVEKARDKSLERHGRERSVEKGLDKGTTRSYDRNKDERNKDDRSKLRHSEASLEKSHPDDHFHSQGLPPPPPLPPNIIPHSMAAKEDLERRAGGARHSQRLSPRHEEREKRRSEENLSVSVDDAKRRRDDDIRDRKRDDRETITVKGEEREREREREREREKSLPLKEDFEASKRRKLKREQQVPSAEPGEYSPMPHHSSLSTSMGPSSYEGRERKSSSMIQHGGYLEEPSIRLLGKEASSKMARRDPDPIAKSKSKNSNFLDIALESMTVNGKTTRGEQSGSGEIGSRE.

The stretch at 935-1003 (NRYESEISKQ…RRRLSREKDT (69 aa)) forms a coiled coil. The Nuclear localization signal motif lies at 964 to 969 (KRKKEK). Disordered regions lie at residues 1244-1382 (LVGV…KDLN) and 1394-1823 (ALSS…GSRE). Composition is skewed to basic and acidic residues over residues 1272-1283 (QMLKTKPLDGRT), 1312-1330 (KSME…DENP), and 1356-1367 (AKQDFGKDDGKS). Residues 1394–1409 (ALSSTAANGSIATGSS) show a composition bias toward polar residues. The span at 1432-1596 (PRHEIVTSVR…EKSHPDDHFH (165 aa)) shows a compositional bias: basic and acidic residues. Residues 1600–1610 (LPPPPPLPPNI) show a composition bias toward pro residues. 4 stretches are compositionally biased toward basic and acidic residues: residues 1616–1625 (AAKEDLERRA), 1636–1648 (PRHE…RSEE), 1655–1706 (DDAK…FEAS), and 1768–1785 (LGKE…DPIA). 2 positions are modified to phosphoserine: S1646 and S1696. The span at 1802 to 1816 (MTVNGKTTRGEQSGS) shows a compositional bias: polar residues.

This sequence belongs to the THOC2 family. As to quaternary structure, component of the THO complex, which is composed of THO1, THO2, THO3, THO5, THO6 and THO7.

It is found in the nucleus. In terms of biological role, acts as a component of the THO subcomplex of the TREX complex which is thought to couple mRNA transcription, processing and nuclear export. The polypeptide is THO complex subunit 2 (THO2) (Arabidopsis thaliana (Mouse-ear cress)).